Here is a 54-residue protein sequence, read N- to C-terminus: Ovomucoid (54 aa).

The Kazal-like domain maps to 4 to 54 (VDCSDHPKPVCSLEYMPLCGSDSKTYSNKCDFCNAVVESNGTLTLSHFGKC). Disulfide bonds link cysteine 6–cysteine 36, cysteine 14–cysteine 33, and cysteine 22–cysteine 54. The N-linked (GlcNAc...) asparagine glycan is linked to asparagine 43.

The protein resides in the secreted. The sequence is that of Ovomucoid from Rhea americana (Greater rhea).